A 197-amino-acid chain; its full sequence is MVSVVGEMFCNPYTTELVVRRRRESLKRERYDVFDLSNNLIFTVDGGIWNIRRKRVLRDAAGIPLLSMRTKGLVPMRYNWEVYKGDSTESDNLLFSAREPNLLSFKTSLDVTLPPDQSSTDISSVEPDFQTFGRYIGSSFKLFEPIHNTLLAEVVHDFTWGGLIKGSYSFKVRVNPYVDFAFVVALLVITDDTSNLR.

The protein belongs to the LOR family.

Might be related to the phospholipid scramblase and tubby-like superfamily of membrane tethered transcription factors. The chain is Protein LURP-one-related 9 from Arabidopsis thaliana (Mouse-ear cress).